We begin with the raw amino-acid sequence, 216 residues long: Probable RNA 2'-phosphotransferase 1 (216 aa).

The protein belongs to the KptA/TPT1 family.

In terms of biological role, removes the 2'-phosphate from RNA via an intermediate in which the phosphate is ADP-ribosylated by NAD followed by a presumed transesterification to release the RNA and generate ADP-ribose 1''-2''-cyclic phosphate (APPR&gt;P). May function as an ADP-ribosylase. The protein is Probable RNA 2'-phosphotransferase 1 (kptA1) of Archaeoglobus fulgidus (strain ATCC 49558 / DSM 4304 / JCM 9628 / NBRC 100126 / VC-16).